Reading from the N-terminus, the 142-residue chain is Transcriptional regulator MraZ (142 aa).

SpoVT-AbrB domains follow at residues 5 to 47 and 76 to 119; these read EYPY…PLAS and ANKA…NPGR.

Belongs to the MraZ family. As to quaternary structure, forms oligomers.

It localises to the cytoplasm. It is found in the nucleoid. The sequence is that of Transcriptional regulator MraZ from Deinococcus deserti (strain DSM 17065 / CIP 109153 / LMG 22923 / VCD115).